The following is a 187-amino-acid chain: MTGSVDRPDQNRGERLMKSPGLDLVRRTLDEARAAARARGQDAGRGRVASVASGRVAGRRRSWSGPGPDIRDPQPLGKAARELAKKRGWSVRVAEGMVLGQWSAVVGHQIAEHARPTALNDGVLSVIAESTAWATQLRIMQAQLLAKIAAAVGNDVVRSLKITGPAAPSWRKGPRHIAGRGPRDTYG.

2 stretches are compositionally biased toward basic and acidic residues: residues 1–17 (MTGS…ERLM) and 35–45 (AARARGQDAGR). Disordered regions lie at residues 1 to 23 (MTGS…PGLD), 35 to 75 (AARA…DPQP), and 168 to 187 (PSWR…DTYG).

It belongs to the UPF0232 family.

The sequence is that of UPF0232 protein Mb0004 from Mycobacterium bovis (strain ATCC BAA-935 / AF2122/97).